The following is a 509-amino-acid chain: Putative thymidine phosphorylase (509 aa).

It belongs to the thymidine/pyrimidine-nucleoside phosphorylase family. Type 2 subfamily.

The enzyme catalyses thymidine + phosphate = 2-deoxy-alpha-D-ribose 1-phosphate + thymine. This is Putative thymidine phosphorylase from Bradyrhizobium sp. (strain ORS 278).